Consider the following 186-residue polypeptide: Potassium-transporting ATPase KdpC subunit (186 aa).

The chain crosses the membrane as a helical span at residues 10–30 (LTIITMVLCGFLFPLAITLIG).

The protein belongs to the KdpC family. As to quaternary structure, the system is composed of three essential subunits: KdpA, KdpB and KdpC.

It localises to the cell membrane. Functionally, part of the high-affinity ATP-driven potassium transport (or Kdp) system, which catalyzes the hydrolysis of ATP coupled with the electrogenic transport of potassium into the cytoplasm. This subunit acts as a catalytic chaperone that increases the ATP-binding affinity of the ATP-hydrolyzing subunit KdpB by the formation of a transient KdpB/KdpC/ATP ternary complex. This is Potassium-transporting ATPase KdpC subunit from Staphylococcus aureus (strain COL).